Here is a 377-residue protein sequence, read N- to C-terminus: Succinyl-diaminopimelate desuccinylase (377 aa).

Histidine 66 provides a ligand contact to Zn(2+). The active site involves aspartate 68. Aspartate 99 provides a ligand contact to Zn(2+). Glutamate 133 functions as the Proton acceptor in the catalytic mechanism. Zn(2+) is bound by residues glutamate 134, glutamate 162, and histidine 348.

The protein belongs to the peptidase M20A family. DapE subfamily. Homodimer. It depends on Zn(2+) as a cofactor. The cofactor is Co(2+).

It catalyses the reaction N-succinyl-(2S,6S)-2,6-diaminopimelate + H2O = (2S,6S)-2,6-diaminopimelate + succinate. It functions in the pathway amino-acid biosynthesis; L-lysine biosynthesis via DAP pathway; LL-2,6-diaminopimelate from (S)-tetrahydrodipicolinate (succinylase route): step 3/3. Its function is as follows. Catalyzes the hydrolysis of N-succinyl-L,L-diaminopimelic acid (SDAP), forming succinate and LL-2,6-diaminopimelate (DAP), an intermediate involved in the bacterial biosynthesis of lysine and meso-diaminopimelic acid, an essential component of bacterial cell walls. In Xylella fastidiosa (strain 9a5c), this protein is Succinyl-diaminopimelate desuccinylase.